Consider the following 75-residue polypeptide: Large ribosomal subunit protein bL32c (75 aa).

Residues 49 to 75 (SPGPTTPIKPNPKKQTGRRPRSQRRRT) are disordered. A compositionally biased stretch (basic residues) spans 59–75 (NPKKQTGRRPRSQRRRT).

The protein belongs to the bacterial ribosomal protein bL32 family.

The protein localises to the plastid. The protein resides in the chloroplast. This is Large ribosomal subunit protein bL32c from Nephroselmis olivacea (Green alga).